Here is a 449-residue protein sequence, read N- to C-terminus: UDP-N-acetylmuramate--L-alanine ligase (449 aa).

110–116 (GTHGKTT) contacts ATP.

Belongs to the MurCDEF family.

It is found in the cytoplasm. It catalyses the reaction UDP-N-acetyl-alpha-D-muramate + L-alanine + ATP = UDP-N-acetyl-alpha-D-muramoyl-L-alanine + ADP + phosphate + H(+). Its pathway is cell wall biogenesis; peptidoglycan biosynthesis. In terms of biological role, cell wall formation. The sequence is that of UDP-N-acetylmuramate--L-alanine ligase from Desulfitobacterium hafniense (strain Y51).